The primary structure comprises 98 residues: uncharacterized protein (98 aa).

It belongs to the HesB/IscA family.

This is an uncharacterized protein from Staphylococcus saprophyticus subsp. saprophyticus (strain ATCC 15305 / DSM 20229 / NCIMB 8711 / NCTC 7292 / S-41).